Here is a 35-residue protein sequence, read N- to C-terminus: U5-ctenitoxin-Co1a (35 aa).

Disulfide bonds link C4–C18, C11–C24, C17–C32, and C26–C30.

As to expression, expressed by the venom gland.

The protein resides in the secreted. Blocks voltage-gated sodium channels (Nav). This Ctenus ornatus (Brazilian spider) protein is U5-ctenitoxin-Co1a.